We begin with the raw amino-acid sequence, 124 residues long: Small ribosomal subunit protein uS12 (124 aa).

Residues 1 to 32 (MPTIQQLVRKGRQDKVSKNKTPALKGSPQRRG) form a disordered region. At aspartate 89 the chain carries 3-methylthioaspartic acid.

This sequence belongs to the universal ribosomal protein uS12 family. Part of the 30S ribosomal subunit. Contacts proteins S8 and S17. May interact with IF1 in the 30S initiation complex.

With S4 and S5 plays an important role in translational accuracy. In terms of biological role, interacts with and stabilizes bases of the 16S rRNA that are involved in tRNA selection in the A site and with the mRNA backbone. Located at the interface of the 30S and 50S subunits, it traverses the body of the 30S subunit contacting proteins on the other side and probably holding the rRNA structure together. The combined cluster of proteins S8, S12 and S17 appears to hold together the shoulder and platform of the 30S subunit. This is Small ribosomal subunit protein uS12 from Nocardioides sp. (strain ATCC BAA-499 / JS614).